Here is a 309-residue protein sequence, read N- to C-terminus: Shugoshin (309 aa).

Residues 42-77 (NLLLKQQVVQCTKTIEKLRNENVALRQKNQELIDGT) are a coiled coil. Disordered stretches follow at residues 165 to 195 (FDNN…KGRR) and 210 to 309 (EEAS…NTFF). Low complexity predominate over residues 167 to 178 (NNSSQSTSSIQN). Basic residues predominate over residues 184–193 (PRKKQSVGKG).

The protein belongs to the shugoshin family. In terms of tissue distribution, expressed in gonads.

Its subcellular location is the nucleus. It localises to the chromosome. The protein resides in the centromere. Its function is as follows. Component of cell cycle checkpoints, which ensures chromosome segregation during meiosis and mitosis. During meiotic prophase, it is involved in the regulation of the synapsis checkpoint, which monitors whether homologous chromosomes have synapsed, and the DNA damage response. Plays a central role in chromosome cohesion during cell division by preventing premature dissociation of cohesin complex after prophase, when most of cohesin complex dissociates from chromosomes arms. The protein is Shugoshin of Caenorhabditis elegans.